The primary structure comprises 693 residues: UvrABC system protein B (693 aa).

Residues 35–188 (ERIKNGEKDV…DDLLRKFVSM (154 aa)) form the Helicase ATP-binding domain. 48 to 55 (GATGTGKS) provides a ligand contact to ATP. The Beta-hairpin motif lies at 101–124 (YYDYYQPEAYVAQTDTFIEKDSSV). One can recognise a Helicase C-terminal domain in the interval 438–604 (QIDDLLGEIK…PLRKKIADIT (167 aa)). Residues 648–683 (VGLIEQLTEQMHAAAGELQFELAARLRDEVGELKKE) enclose the UVR domain.

The protein belongs to the UvrB family. In terms of assembly, forms a heterotetramer with UvrA during the search for lesions. Interacts with UvrC in an incision complex.

It localises to the cytoplasm. The UvrABC repair system catalyzes the recognition and processing of DNA lesions. A damage recognition complex composed of 2 UvrA and 2 UvrB subunits scans DNA for abnormalities. Upon binding of the UvrA(2)B(2) complex to a putative damaged site, the DNA wraps around one UvrB monomer. DNA wrap is dependent on ATP binding by UvrB and probably causes local melting of the DNA helix, facilitating insertion of UvrB beta-hairpin between the DNA strands. Then UvrB probes one DNA strand for the presence of a lesion. If a lesion is found the UvrA subunits dissociate and the UvrB-DNA preincision complex is formed. This complex is subsequently bound by UvrC and the second UvrB is released. If no lesion is found, the DNA wraps around the other UvrB subunit that will check the other stand for damage. The polypeptide is UvrABC system protein B (Arthrobacter sp. (strain FB24)).